The following is a 244-amino-acid chain: Glucosamine-6-phosphate deaminase (244 aa).

D67 serves as the catalytic Proton acceptor; for enolization step. The active-site For ring-opening step is the N136. H138 (proton acceptor; for ring-opening step) is an active-site residue. E143 acts as the For ring-opening step in catalysis.

Belongs to the glucosamine/galactosamine-6-phosphate isomerase family. NagB subfamily.

The enzyme catalyses alpha-D-glucosamine 6-phosphate + H2O = beta-D-fructose 6-phosphate + NH4(+). It functions in the pathway amino-sugar metabolism; N-acetylneuraminate degradation; D-fructose 6-phosphate from N-acetylneuraminate: step 5/5. Catalyzes the reversible isomerization-deamination of glucosamine 6-phosphate (GlcN6P) to form fructose 6-phosphate (Fru6P) and ammonium ion. The protein is Glucosamine-6-phosphate deaminase of Clostridium botulinum (strain ATCC 19397 / Type A).